We begin with the raw amino-acid sequence, 250 residues long: tRNA (guanine-N(1)-)-methyltransferase (250 aa).

S-adenosyl-L-methionine is bound by residues glycine 116 and 136–141 (IGDYVL).

Belongs to the RNA methyltransferase TrmD family. Homodimer.

It localises to the cytoplasm. It carries out the reaction guanosine(37) in tRNA + S-adenosyl-L-methionine = N(1)-methylguanosine(37) in tRNA + S-adenosyl-L-homocysteine + H(+). Its function is as follows. Specifically methylates guanosine-37 in various tRNAs. This is tRNA (guanine-N(1)-)-methyltransferase from Pseudomonas putida (strain GB-1).